We begin with the raw amino-acid sequence, 536 residues long: Xylulose kinase (536 aa).

Positions 99, 170, 280, and 281 each coordinate substrate. ATP is bound by residues W355, 441–442, and N445; that span reads GA.

This sequence belongs to the FGGY kinase family. As to quaternary structure, monomer.

It carries out the reaction D-xylulose + ATP = D-xylulose 5-phosphate + ADP + H(+). Phosphorylates D-xylulose to produce D-xylulose 5-phosphate, a molecule that may play an important role in the regulation of glucose metabolism and lipogenesis. The sequence is that of Xylulose kinase (Xylb) from Rattus norvegicus (Rat).